Here is an 83-residue protein sequence, read N- to C-terminus: Small ribosomal subunit protein uS17 (83 aa).

It belongs to the universal ribosomal protein uS17 family. As to quaternary structure, part of the 30S ribosomal subunit.

Functionally, one of the primary rRNA binding proteins, it binds specifically to the 5'-end of 16S ribosomal RNA. The chain is Small ribosomal subunit protein uS17 from Colwellia psychrerythraea (strain 34H / ATCC BAA-681) (Vibrio psychroerythus).